A 284-amino-acid polypeptide reads, in one-letter code: Bifunctional protein FolD (284 aa).

Residues 165–167 (GRS), serine 190, and isoleucine 231 each bind NADP(+).

The protein belongs to the tetrahydrofolate dehydrogenase/cyclohydrolase family. As to quaternary structure, homodimer.

The enzyme catalyses (6R)-5,10-methylene-5,6,7,8-tetrahydrofolate + NADP(+) = (6R)-5,10-methenyltetrahydrofolate + NADPH. It carries out the reaction (6R)-5,10-methenyltetrahydrofolate + H2O = (6R)-10-formyltetrahydrofolate + H(+). Its pathway is one-carbon metabolism; tetrahydrofolate interconversion. Functionally, catalyzes the oxidation of 5,10-methylenetetrahydrofolate to 5,10-methenyltetrahydrofolate and then the hydrolysis of 5,10-methenyltetrahydrofolate to 10-formyltetrahydrofolate. This chain is Bifunctional protein FolD, found in Lysinibacillus sphaericus (strain C3-41).